The primary structure comprises 242 residues: Ribonuclease 3 (242 aa).

The region spanning 10 to 146 (LQNFNKKFAD…FVGALYLDQG (137 aa)) is the RNase III domain. Residue Glu-59 participates in Mg(2+) binding. Asp-63 is a catalytic residue. Positions 132 and 135 each coordinate Mg(2+). Glu-135 is a catalytic residue. The DRBM domain maps to 172-241 (DFKTQFQELI…AEKAYNDMKK (70 aa)). The interval 216–242 (VAKGQGRTKKESEQKAAEKAYNDMKKK) is disordered. Basic and acidic residues predominate over residues 223 to 242 (TKKESEQKAAEKAYNDMKKK).

It belongs to the ribonuclease III family. In terms of assembly, homodimer. It depends on Mg(2+) as a cofactor.

The protein resides in the cytoplasm. It catalyses the reaction Endonucleolytic cleavage to 5'-phosphomonoester.. Digests double-stranded RNA. Involved in the processing of primary rRNA transcript to yield the immediate precursors to the large and small rRNAs (23S and 16S). Processes some mRNAs, and tRNAs when they are encoded in the rRNA operon. Processes pre-crRNA and tracrRNA of type II CRISPR loci if present in the organism. The polypeptide is Ribonuclease 3 (Staphylococcus carnosus (strain TM300)).